The primary structure comprises 238 residues: Triggering receptor expressed on myeloid cells 1 (238 aa).

An N-terminal signal peptide occupies residues 1–20; the sequence is MRSARLGRLLWMLFITEIQA. Residues 21–129 enclose the Ig-like V-type domain; it reads ATELPEEKYI…KDPIILFYPV (109 aa). Over 21–210 the chain is Extracellular; sequence ATELPEEKYI…DITRDTEISL (190 aa). Cys-41 and Cys-113 are joined by a disulfide. Asn-135 carries an N-linked (GlcNAc...) asparagine glycan. The tract at residues 141–169 is disordered; the sequence is PASAETPTQSCSPTTTLPPTTTTNRHRPR. Residues 146–163 show a composition bias toward low complexity; the sequence is TPTQSCSPTTTLPPTTTT. A glycan (N-linked (GlcNAc...) asparagine) is linked at Asn-198. The chain crosses the membrane as a helical span at residues 211–231; the sequence is ILPAVCGLLSKSLVFIVLFVV. Topologically, residues 232 to 238 are cytoplasmic; it reads TRMSFTP.

As to quaternary structure, monomer. Homomultimer; when activated. Interacts with TYROBP/DAP12. Interacts with TLR4.

It localises to the cell membrane. Its function is as follows. Cell surface receptor that plays important roles in innate and adaptive immunity by amplifying inflammatory responses. Upon activation by various ligands such as PGLYRP1, HMGB1 or HSP70, multimerizes and forms a complex with transmembrane adapter TYROBP/DAP12. In turn, initiates a SYK-mediated cascade of tyrosine phosphorylation, activating multiple downstream mediators such as BTK, MAPK1, MAPK3 or phospholipase C-gamma. This cascade promotes the neutrophil- and macrophage-mediated release of pro-inflammatory cytokines and/or chemokines, as well as their migration and thereby amplifies inflammatory responses that are triggered by bacterial and fungal infections. By also promoting the amplification of inflammatory signals that are initially triggered by Toll-like receptor (TLR) and NOD-like receptor engagement, plays a major role in the pathophysiology of acute and chronic inflammatory diseases of different etiologies including septic shock and atherosclerosis. This chain is Triggering receptor expressed on myeloid cells 1 (TREM1), found in Sus scrofa (Pig).